The following is a 269-amino-acid chain: UPF0162 protein bbp_163 (269 aa).

It belongs to the UPF0162 family.

In Buchnera aphidicola subsp. Baizongia pistaciae (strain Bp), this protein is UPF0162 protein bbp_163.